Here is a 507-residue protein sequence, read N- to C-terminus: ATP synthase subunit alpha, chloroplastic (507 aa).

G170 to T177 lines the ATP pocket.

The protein belongs to the ATPase alpha/beta chains family. In terms of assembly, F-type ATPases have 2 components, CF(1) - the catalytic core - and CF(0) - the membrane proton channel. CF(1) has five subunits: alpha(3), beta(3), gamma(1), delta(1), epsilon(1). CF(0) has four main subunits: a, b, b' and c.

The protein resides in the plastid. Its subcellular location is the chloroplast thylakoid membrane. The catalysed reaction is ATP + H2O + 4 H(+)(in) = ADP + phosphate + 5 H(+)(out). Its function is as follows. Produces ATP from ADP in the presence of a proton gradient across the membrane. The alpha chain is a regulatory subunit. The sequence is that of ATP synthase subunit alpha, chloroplastic from Nicotiana sylvestris (Wood tobacco).